A 506-amino-acid polypeptide reads, in one-letter code: Xaa-Pro aminopeptidase 3 (506 aa).

A mitochondrion-targeting transit peptide spans 1–31; it reads MPSLLSTPKLAPVLARLRGLSGCMSCLQRRY. The interval 54–79 is interaction with TNFRSF1B; that stretch reads HPHLLRPGEVTPGLSQVEYALRRHKL. Residues Tyr300, Asp331, Asp342, His423, His430, Glu450, and Glu474 each contribute to the substrate site. Positions 331, 342, and 423 each coordinate Mn(2+). Residues Glu450 and Glu474 each contribute to the Mn(2+) site.

It belongs to the peptidase M24B family. Homodimer. Interacts with TNFRSF1B/TNFR2 (activated) and TRAF2. Mn(2+) serves as cofactor. Expressed in brain, kidney, heart, liver, skeletal muscle and testis.

The protein localises to the mitochondrion. The protein resides in the cytoplasm. The enzyme catalyses Release of any N-terminal amino acid, including proline, that is linked to proline, even from a dipeptide or tripeptide.. Functionally, catalyzes the removal of a penultimate prolyl residue from the N-termini of peptides, such as Leu-Pro-Ala. Also shows low activity towards peptides with Ala or Ser at the P1 position. Promotes TNFRSF1B-mediated phosphorylation of MAPK8/JNK1 and MAPK9/JNK2, suggesting a function as an adapter protein for TNFRSF1B; the effect is independent of XPNPEP3 peptidase activity. May inhibit apoptotic cell death induced via TNF-TNFRSF1B signaling. The polypeptide is Xaa-Pro aminopeptidase 3 (Xpnpep3) (Mus musculus (Mouse)).